The primary structure comprises 386 residues: UDP-N-acetylbacillosamine transaminase (386 aa).

Residues 25–28, alanine 56, and serine 179 each bind substrate; that span reads NYIA. At lysine 184 the chain carries N6-(pyridoxal phosphate)lysine. Residues asparagine 227 and 325–328 each bind substrate; that span reads QIET.

The protein belongs to the DegT/DnrJ/EryC1 family. Pyridoxal 5'-phosphate serves as cofactor.

The enzyme catalyses UDP-N-acetylbacillosamine + 2-oxoglutarate = UDP-2-acetamido-2,6-dideoxy-alpha-D-xylo-hex-4-ulose + L-glutamate. It functions in the pathway protein modification; protein glycosylation. Its function is as follows. Aminotransferase involved in the bacillosamine biosynthesis pathway by producing UDP-4-amino-4,6-dideoxy-alpha-D-GlcNAc (UDP-2-acetamido-4-amino-2,4,6-trideoxy-alpha-D-glucopyranose), a precursor used in the production of the glycan component 2,4-diacetamido-2,4,6-trideoxy-alpha-D-glucopyranose. Required for host colonization and virulence. Involved in the N-linked protein glycosylation pathway. In Campylobacter jejuni subsp. jejuni serotype O:2 (strain ATCC 700819 / NCTC 11168), this protein is UDP-N-acetylbacillosamine transaminase (pglE).